Here is a 383-residue protein sequence, read N- to C-terminus: 3-dehydroquinate synthase (383 aa).

Residues 81-86 (EGEVSK), 115-119 (GVVGD), 139-140 (TS), lysine 152, and lysine 161 contribute to the NAD(+) site. 3 residues coordinate Zn(2+): glutamate 194, histidine 256, and histidine 274.

This sequence belongs to the sugar phosphate cyclases superfamily. Dehydroquinate synthase family. Co(2+) is required as a cofactor. It depends on Zn(2+) as a cofactor. The cofactor is NAD(+).

It is found in the cytoplasm. The catalysed reaction is 7-phospho-2-dehydro-3-deoxy-D-arabino-heptonate = 3-dehydroquinate + phosphate. It functions in the pathway metabolic intermediate biosynthesis; chorismate biosynthesis; chorismate from D-erythrose 4-phosphate and phosphoenolpyruvate: step 2/7. Its function is as follows. Catalyzes the conversion of 3-deoxy-D-arabino-heptulosonate 7-phosphate (DAHP) to dehydroquinate (DHQ). The sequence is that of 3-dehydroquinate synthase from Nitrobacter hamburgensis (strain DSM 10229 / NCIMB 13809 / X14).